A 1673-amino-acid chain; its full sequence is Calmodulin-binding transcription activator 1 (1673 aa).

A DNA-binding region (CG-1) is located at residues 63–188 (KCSSLPKERH…YLNVPAIEDC (126 aa)). The short motif at 112–119 (RKKVKYRK) is the Nuclear localization signal element. Positions 283 to 375 (HRIISPKVEP…LNSDPDMVDS (93 aa)) are disordered. Residues 302 to 313 (EVQHNDVSEGKH) show a composition bias toward basic and acidic residues. Polar residues predominate over residues 337–367 (HQSSTEVSSTNQVEVPDTTQSSPVSISSGLN). In terms of domain architecture, IPT/TIG spans 875–953 (DYSPEWSYPE…ISNSVVFEYK (79 aa)). Residues 990 to 1021 (MAEMTGSQQHKQASGGGSSGGGSGSGNGGSQA) are disordered. Positions 1003–1018 (SGGGSSGGGSGSGNGG) are enriched in gly residues. 3 ANK repeats span residues 1064–1093 (RGMT…KHAD), 1109–1129 (FSCT…AVVL), and 1143–1172 (LGRL…DEQA). Disordered stretches follow at residues 1215-1246 (ASTN…PKKH) and 1264-1317 (ALSL…GSQP). Residues 1273 to 1289 (RKQSPSSKQSVPETLSP) are compositionally biased toward polar residues. IQ domains lie at 1547–1576 (QEVA…AAIL), 1577–1599 (IQSK…AAVL), and 1600–1622 (IQKY…TAVI).

The protein belongs to the CAMTA family. May interact with calmodulin. In terms of tissue distribution, normally expressed in non-neoplastic adult central nervous system tissues: detected in whole brain, cerebellum, brain cortex, occipital lobe, frontal lobe, temporal lobe, putamen. Expression levels are low in oligodendroglial tumors, and are reduced by half in oligodendroglioma and astrocytoma cases with 1p loss of heterozygosity. Detected in neuroblastic-type cultured neuroblastoma cells. Expressed in heart and kidney.

The protein localises to the nucleus. It localises to the cytoplasm. Transcriptional activator. The sequence is that of Calmodulin-binding transcription activator 1 from Homo sapiens (Human).